The following is a 171-amino-acid chain: uncharacterized protein (171 aa).

One can recognise a PfpI endopeptidase domain in the interval 3–171 (KKVAIILANE…FNREIVKQLQ (169 aa)).

The protein belongs to the peptidase C56 family.

This is an uncharacterized protein from Staphylococcus aureus (strain COL).